A 205-amino-acid polypeptide reads, in one-letter code: Protease (205 aa).

Catalysis depends on residues His-54, Asp-71, and Cys-122.

This sequence belongs to the peptidase C5 family. As to quaternary structure, interacts with protease cofactor pVI-C; this interaction is necessary for protease activation.

The protein resides in the virion. Its subcellular location is the host nucleus. It catalyses the reaction Cleaves proteins of the adenovirus and its host cell at two consensus sites: -Yaa-Xaa-Gly-Gly-|-Xaa- and -Yaa-Xaa-Gly-Xaa-|-Gly- (in which Yaa is Met, Ile or Leu, and Xaa is any amino acid).. Its activity is regulated as follows. Requires DNA and protease cofactor for maximal activation. Inside nascent virions, becomes partially activated by binding to the viral DNA, allowing it to cleave the cofactor that binds to the protease and fully activates it. Actin, like the viral protease cofactor, seems to act as a cofactor in the cleavage of cytokeratin 18 and of actin itself. Cleaves viral precursor proteins (pTP, pIIIa, pVI, pVII, pVIII, and pX) inside newly assembled particles giving rise to mature virions. Protease complexed to its cofactor slides along the viral DNA to specifically locate and cleave the viral precursors. Mature virions have a weakened organization compared to the unmature virions, thereby facilitating subsequent uncoating. Without maturation, the particle lacks infectivity and is unable to uncoat. Late in adenovirus infection, in the cytoplasm, may participate in the cytoskeleton destruction. Cleaves host cell cytoskeletal keratins K7 and K18. In Homo sapiens (Human), this protein is Protease.